The following is a 467-amino-acid chain: Probable glutamate decarboxylase gamma (467 aa).

Residue Lys-278 is modified to N6-(pyridoxal phosphate)lysine.

This sequence belongs to the group II decarboxylase family. Pyridoxal 5'-phosphate is required as a cofactor.

It carries out the reaction L-glutamate + H(+) = 4-aminobutanoate + CO2. The sequence is that of Probable glutamate decarboxylase gamma from Listeria innocua serovar 6a (strain ATCC BAA-680 / CLIP 11262).